A 113-amino-acid chain; its full sequence is Ribosome-binding factor A (113 aa).

The protein belongs to the RbfA family. In terms of assembly, monomer. Binds 30S ribosomal subunits, but not 50S ribosomal subunits or 70S ribosomes.

It is found in the cytoplasm. Its function is as follows. One of several proteins that assist in the late maturation steps of the functional core of the 30S ribosomal subunit. Associates with free 30S ribosomal subunits (but not with 30S subunits that are part of 70S ribosomes or polysomes). Required for efficient processing of 16S rRNA. May interact with the 5'-terminal helix region of 16S rRNA. This chain is Ribosome-binding factor A, found in Mycoplasmopsis agalactiae (strain NCTC 10123 / CIP 59.7 / PG2) (Mycoplasma agalactiae).